The primary structure comprises 459 residues: MSNYAIILAAGKGTRMKSDLPKVMHKVSGITMLEHVFRSVQAIEPSKIVTVIGHKAELVRDVLGDKSEFVMQTEQLGTGHAVMMAEEELATSKGHTLVIAGDTPLITGESLKNLIGFHVNHKNVATILTADAANPFGYGRIIRNSDDEVTKIVEQKDANDFEQQVKEINTGTYVFDNQSLFEALKDINTNNAQGEYYLTDVIGIFKEAGKKVGAYKLRDFDESLGVNDRVALATAEKVMRHRIARQHMVNGVTVVNPDSAYIDIDVEIGEESVIEPNVTLKGQTKIGKGTLLTNGSYLVDAQVGNDVTITNSMVEESIISDGVTVGPYAHIRPGTSLAKGVHIGNFVEVKGSQIGENTKAGHLTYIGNAEVGCDVNFGAGTITVNYDGQNKFKTEIGSNVFIGSNSTLIAPLEIGDNALTAAGSTITDNVPIDSIAIGRGRQVNKEGYANKKPHHPSQK.

The pyrophosphorylase stretch occupies residues 1–229 (MSNYAIILAA…FDESLGVNDR (229 aa)). Residues 8-11 (LAAG), K22, Q72, and 77-78 (GT) contribute to the UDP-N-acetyl-alpha-D-glucosamine site. Mg(2+) is bound at residue D102. 4 residues coordinate UDP-N-acetyl-alpha-D-glucosamine: G139, E154, N169, and N227. Mg(2+) is bound at residue N227. Positions 230 to 250 (VALATAEKVMRHRIARQHMVN) are linker. Residues 251-459 (GVTVVNPDSA…NKKPHHPSQK (209 aa)) are N-acetyltransferase. Residues R332 and K350 each contribute to the UDP-N-acetyl-alpha-D-glucosamine site. H362 (proton acceptor) is an active-site residue. Positions 365 and 376 each coordinate UDP-N-acetyl-alpha-D-glucosamine. Acetyl-CoA-binding positions include A379, 385-386 (NY), S404, A422, and R439.

In the N-terminal section; belongs to the N-acetylglucosamine-1-phosphate uridyltransferase family. This sequence in the C-terminal section; belongs to the transferase hexapeptide repeat family. As to quaternary structure, homotrimer. It depends on Mg(2+) as a cofactor.

It is found in the cytoplasm. The enzyme catalyses alpha-D-glucosamine 1-phosphate + acetyl-CoA = N-acetyl-alpha-D-glucosamine 1-phosphate + CoA + H(+). It catalyses the reaction N-acetyl-alpha-D-glucosamine 1-phosphate + UTP + H(+) = UDP-N-acetyl-alpha-D-glucosamine + diphosphate. It functions in the pathway nucleotide-sugar biosynthesis; UDP-N-acetyl-alpha-D-glucosamine biosynthesis; N-acetyl-alpha-D-glucosamine 1-phosphate from alpha-D-glucosamine 6-phosphate (route II): step 2/2. Its pathway is nucleotide-sugar biosynthesis; UDP-N-acetyl-alpha-D-glucosamine biosynthesis; UDP-N-acetyl-alpha-D-glucosamine from N-acetyl-alpha-D-glucosamine 1-phosphate: step 1/1. It participates in bacterial outer membrane biogenesis; LPS lipid A biosynthesis. In terms of biological role, catalyzes the last two sequential reactions in the de novo biosynthetic pathway for UDP-N-acetylglucosamine (UDP-GlcNAc). The C-terminal domain catalyzes the transfer of acetyl group from acetyl coenzyme A to glucosamine-1-phosphate (GlcN-1-P) to produce N-acetylglucosamine-1-phosphate (GlcNAc-1-P), which is converted into UDP-GlcNAc by the transfer of uridine 5-monophosphate (from uridine 5-triphosphate), a reaction catalyzed by the N-terminal domain. The chain is Bifunctional protein GlmU from Streptococcus agalactiae serotype III (strain NEM316).